Consider the following 216-residue polypeptide: NADH-quinone oxidoreductase subunit C (216 aa).

Belongs to the complex I 30 kDa subunit family. As to quaternary structure, NDH-1 is composed of 14 different subunits. Subunits NuoB, C, D, E, F, and G constitute the peripheral sector of the complex.

It is found in the cell inner membrane. The catalysed reaction is a quinone + NADH + 5 H(+)(in) = a quinol + NAD(+) + 4 H(+)(out). In terms of biological role, NDH-1 shuttles electrons from NADH, via FMN and iron-sulfur (Fe-S) centers, to quinones in the respiratory chain. The immediate electron acceptor for the enzyme in this species is believed to be ubiquinone. Couples the redox reaction to proton translocation (for every two electrons transferred, four hydrogen ions are translocated across the cytoplasmic membrane), and thus conserves the redox energy in a proton gradient. This chain is NADH-quinone oxidoreductase subunit C, found in Francisella tularensis subsp. holarctica (strain FTNF002-00 / FTA).